A 60-amino-acid chain; its full sequence is Cecropin-B type 1 (60 aa).

A signal peptide spans M1–A24. An Isoleucine amide modification is found at I58.

Belongs to the cecropin family.

The protein resides in the secreted. Cecropins have lytic and antibacterial activity against several Gram-positive and Gram-negative bacteria. The sequence is that of Cecropin-B type 1 (CECB1) from Aedes albopictus (Asian tiger mosquito).